A 299-amino-acid polypeptide reads, in one-letter code: Proline iminopeptidase (299 aa).

One can recognise an AB hydrolase-1 domain in the interval 26-272; the sequence is VLLLAGGPGF…QFLYCANGSH (247 aa). Ser-103 (nucleophile) is an active-site residue. Asp-245 is an active-site residue. The active-site Proton donor is the His-272.

This sequence belongs to the peptidase S33 family. Monomer.

It carries out the reaction Release of N-terminal proline from a peptide.. Functionally, releases the N-terminal proline from various substrates. The polypeptide is Proline iminopeptidase (Chitinophaga pinensis (strain ATCC 43595 / DSM 2588 / LMG 13176 / NBRC 15968 / NCIMB 11800 / UQM 2034)).